Here is a 242-residue protein sequence, read N- to C-terminus: DNA repair protein RecO (242 aa).

Belongs to the RecO family.

Functionally, involved in DNA repair and RecF pathway recombination. The sequence is that of DNA repair protein RecO from Laribacter hongkongensis (strain HLHK9).